The sequence spans 395 residues: Tubulin-like protein CetZ1 (395 aa).

GTP contacts are provided by residues 10–14, 110–112, glutamate 142, asparagine 169, and asparagine 187; these read QAGGK and GTG.

This sequence belongs to the CetZ family.

The protein resides in the cytoplasm. Its function is as follows. Involved in cell shape control. Essential for the development of a rod-shaped cell type required for efficient swimming. The protein is Tubulin-like protein CetZ1 of Haloferax volcanii (strain ATCC 29605 / DSM 3757 / JCM 8879 / NBRC 14742 / NCIMB 2012 / VKM B-1768 / DS2) (Halobacterium volcanii).